A 308-amino-acid polypeptide reads, in one-letter code: Methionyl-tRNA formyltransferase (308 aa).

111–114 (SLLP) is a (6S)-5,6,7,8-tetrahydrofolate binding site.

It belongs to the Fmt family.

It catalyses the reaction L-methionyl-tRNA(fMet) + (6R)-10-formyltetrahydrofolate = N-formyl-L-methionyl-tRNA(fMet) + (6S)-5,6,7,8-tetrahydrofolate + H(+). Its function is as follows. Attaches a formyl group to the free amino group of methionyl-tRNA(fMet). The formyl group appears to play a dual role in the initiator identity of N-formylmethionyl-tRNA by promoting its recognition by IF2 and preventing the misappropriation of this tRNA by the elongation apparatus. The sequence is that of Methionyl-tRNA formyltransferase from Thermodesulfovibrio yellowstonii (strain ATCC 51303 / DSM 11347 / YP87).